The chain runs to 395 residues: Succinyl-diaminopimelate desuccinylase (395 aa).

His81 serves as a coordination point for Zn(2+). Asp83 is an active-site residue. Residue Asp114 participates in Zn(2+) binding. Glu146 acts as the Proton acceptor in catalysis. Residues Glu147, Glu175, and His364 each coordinate Zn(2+).

Belongs to the peptidase M20A family. DapE subfamily. In terms of assembly, homodimer. It depends on Zn(2+) as a cofactor. Co(2+) serves as cofactor.

It catalyses the reaction N-succinyl-(2S,6S)-2,6-diaminopimelate + H2O = (2S,6S)-2,6-diaminopimelate + succinate. It functions in the pathway amino-acid biosynthesis; L-lysine biosynthesis via DAP pathway; LL-2,6-diaminopimelate from (S)-tetrahydrodipicolinate (succinylase route): step 3/3. Functionally, catalyzes the hydrolysis of N-succinyl-L,L-diaminopimelic acid (SDAP), forming succinate and LL-2,6-diaminopimelate (DAP), an intermediate involved in the bacterial biosynthesis of lysine and meso-diaminopimelic acid, an essential component of bacterial cell walls. The protein is Succinyl-diaminopimelate desuccinylase of Parvibaculum lavamentivorans (strain DS-1 / DSM 13023 / NCIMB 13966).